The chain runs to 619 residues: Dihydroxy-acid dehydratase 1 (619 aa).

Position 81 (Asp-81) interacts with Mg(2+). Residue Cys-122 participates in [2Fe-2S] cluster binding. Residues Asp-123 and Lys-124 each coordinate Mg(2+). The residue at position 124 (Lys-124) is an N6-carboxylysine. Cys-198 lines the [2Fe-2S] cluster pocket. Glu-494 provides a ligand contact to Mg(2+). The active-site Proton acceptor is Ser-520.

Belongs to the IlvD/Edd family. Homodimer. It depends on [2Fe-2S] cluster as a cofactor. The cofactor is Mg(2+).

It carries out the reaction (2R)-2,3-dihydroxy-3-methylbutanoate = 3-methyl-2-oxobutanoate + H2O. The enzyme catalyses (2R,3R)-2,3-dihydroxy-3-methylpentanoate = (S)-3-methyl-2-oxopentanoate + H2O. It participates in amino-acid biosynthesis; L-isoleucine biosynthesis; L-isoleucine from 2-oxobutanoate: step 3/4. The protein operates within amino-acid biosynthesis; L-valine biosynthesis; L-valine from pyruvate: step 3/4. In terms of biological role, functions in the biosynthesis of branched-chain amino acids. Catalyzes the dehydration of (2R,3R)-2,3-dihydroxy-3-methylpentanoate (2,3-dihydroxy-3-methylvalerate) into 2-oxo-3-methylpentanoate (2-oxo-3-methylvalerate) and of (2R)-2,3-dihydroxy-3-methylbutanoate (2,3-dihydroxyisovalerate) into 2-oxo-3-methylbutanoate (2-oxoisovalerate), the penultimate precursor to L-isoleucine and L-valine, respectively. This Bordetella bronchiseptica (strain ATCC BAA-588 / NCTC 13252 / RB50) (Alcaligenes bronchisepticus) protein is Dihydroxy-acid dehydratase 1.